The chain runs to 229 residues: Lipoprotein-releasing system ATP-binding protein LolD (229 aa).

Residues 6–226 (LELKSVDRHY…TLSDGRVVEL (221 aa)) form the ABC transporter domain. 42-49 (APSGTGKS) is a binding site for ATP.

It belongs to the ABC transporter superfamily. Lipoprotein translocase (TC 3.A.1.125) family. The complex is composed of two ATP-binding proteins (LolD) and two transmembrane proteins (LolC and LolE).

The protein resides in the cell inner membrane. Functionally, part of the ABC transporter complex LolCDE involved in the translocation of mature outer membrane-directed lipoproteins, from the inner membrane to the periplasmic chaperone, LolA. Responsible for the formation of the LolA-lipoprotein complex in an ATP-dependent manner. This is Lipoprotein-releasing system ATP-binding protein LolD from Chelativorans sp. (strain BNC1).